We begin with the raw amino-acid sequence, 86 residues long: Acyl carrier protein (86 aa).

The Carrier domain occupies 5 to 80 (EEILKKVQSI…EAVEFIIDKI (76 aa)). Ser-40 is modified (O-(pantetheine 4'-phosphoryl)serine).

Belongs to the acyl carrier protein (ACP) family. Post-translationally, 4'-phosphopantetheine is transferred from CoA to a specific serine of apo-ACP by AcpS. This modification is essential for activity because fatty acids are bound in thioester linkage to the sulfhydryl of the prosthetic group.

The protein resides in the plastid. The protein localises to the chloroplast. It participates in lipid metabolism; fatty acid biosynthesis. Its function is as follows. Carrier of the growing fatty acid chain in fatty acid biosynthesis. The protein is Acyl carrier protein of Cyanidium caldarium (Red alga).